A 603-amino-acid chain; its full sequence is Leucine-rich repeat-containing protein 40 (603 aa).

The interval 1 to 27 is disordered; that stretch reads MAAARRARAGDPRAGFRRAAEEQSPAV. 20 LRR repeats span residues 83-104, 106-127, 129-150, 152-173, 175-196, 198-219, 221-242, 244-265, 266-286, 290-311, 313-335, 336-357, 401-422, 427-449, 451-473, 474-495, 497-518, 520-541, 544-565, and 567-588; these read DLTK…VRLL, ALTV…LGQL, NLQK…LLQL, HLKG…FGQL, SLEE…FALL, NLVR…ISAM, SLRQ…LASM, SLEQ…PSCK, LLKE…ENLK, SLSV…ITLL, KLER…GNLS, QLKF…LLQK, TLKL…VFSA, PVTS…VELK, SVCD…CTLH, KLTH…MEAL, RLQV…LYRM, ALET…QLKK, QLGT…LGNC, and TLRT…ILAK.

The sequence is that of Leucine-rich repeat-containing protein 40 (LRRC40) from Gallus gallus (Chicken).